The sequence spans 362 residues: Heat-inducible transcription repressor HrcA (362 aa).

This sequence belongs to the HrcA family.

Negative regulator of class I heat shock genes (grpE-dnaK-dnaJ and groELS operons). Prevents heat-shock induction of these operons. This is Heat-inducible transcription repressor HrcA from Bradyrhizobium sp. (strain BTAi1 / ATCC BAA-1182).